Here is a 219-residue protein sequence, read N- to C-terminus: Large ribosomal subunit protein uL4 (219 aa).

The tract at residues 45–103 (ARRQGTHATKTRGQVRGGGRKPYRQKGTGRARQGSIRAPQFTGGGTVHGPQPRDYDQRT) is disordered. Residues 62–73 (GGRKPYRQKGTG) show a composition bias toward basic residues.

It belongs to the universal ribosomal protein uL4 family. As to quaternary structure, part of the 50S ribosomal subunit.

One of the primary rRNA binding proteins, this protein initially binds near the 5'-end of the 23S rRNA. It is important during the early stages of 50S assembly. It makes multiple contacts with different domains of the 23S rRNA in the assembled 50S subunit and ribosome. In terms of biological role, forms part of the polypeptide exit tunnel. The sequence is that of Large ribosomal subunit protein uL4 from Corynebacterium kroppenstedtii (strain DSM 44385 / JCM 11950 / CIP 105744 / CCUG 35717).